A 438-amino-acid chain; its full sequence is 23S rRNA (uracil(1939)-C(5))-methyltransferase RlmD (438 aa).

The region spanning 11–69 is the TRAM domain; the sequence is LQPESKHQQVLVEKLDHQGAGIAYLNKKPLFIDGTLPGEEVVTQLTESKSKFARGKLIK. C82, C88, C91, and C169 together coordinate [4Fe-4S] cluster. 6 residues coordinate S-adenosyl-L-methionine: Q272, F301, N306, E322, N349, and D370. Residue C396 is the Nucleophile of the active site.

It belongs to the class I-like SAM-binding methyltransferase superfamily. RNA M5U methyltransferase family. RlmD subfamily.

The catalysed reaction is uridine(1939) in 23S rRNA + S-adenosyl-L-methionine = 5-methyluridine(1939) in 23S rRNA + S-adenosyl-L-homocysteine + H(+). Catalyzes the formation of 5-methyl-uridine at position 1939 (m5U1939) in 23S rRNA. The polypeptide is 23S rRNA (uracil(1939)-C(5))-methyltransferase RlmD (Vibrio vulnificus (strain CMCP6)).